Reading from the N-terminus, the 87-residue chain is U3-theraphotoxin-Hhn1a 13 (87 aa).

The signal sequence occupies residues 1-24 (MVNMKASMFLTSAGLVPLFVVCYA). A propeptide spanning residues 25–52 (SESEEKEFPKEMLSSIFAVDNDFKQEER) is cleaved from the precursor. 3 disulfides stabilise this stretch: C54/C67, C61/C72, and C66/C79.

This sequence belongs to the neurotoxin 10 (Hwtx-1) family. 51 (Hntx-8) subfamily. Hntx-8 sub-subfamily. As to expression, expressed by the venom gland.

The protein resides in the secreted. In terms of biological role, ion channel inhibitor. In Cyriopagopus hainanus (Chinese bird spider), this protein is U3-theraphotoxin-Hhn1a 13.